We begin with the raw amino-acid sequence, 321 residues long: Acetyl-coenzyme A carboxylase carboxyl transferase subunit alpha (321 aa).

The 262-residue stretch at 32 to 293 folds into the CoA carboxyltransferase C-terminal domain; sequence DISEEIARLQ…KRVLQDQLKE (262 aa).

Belongs to the AccA family. In terms of assembly, acetyl-CoA carboxylase is a heterohexamer composed of biotin carboxyl carrier protein (AccB), biotin carboxylase (AccC) and two subunits each of ACCase subunit alpha (AccA) and ACCase subunit beta (AccD).

The protein resides in the cytoplasm. The catalysed reaction is N(6)-carboxybiotinyl-L-lysyl-[protein] + acetyl-CoA = N(6)-biotinyl-L-lysyl-[protein] + malonyl-CoA. Its pathway is lipid metabolism; malonyl-CoA biosynthesis; malonyl-CoA from acetyl-CoA: step 1/1. In terms of biological role, component of the acetyl coenzyme A carboxylase (ACC) complex. First, biotin carboxylase catalyzes the carboxylation of biotin on its carrier protein (BCCP) and then the CO(2) group is transferred by the carboxyltransferase to acetyl-CoA to form malonyl-CoA. The protein is Acetyl-coenzyme A carboxylase carboxyl transferase subunit alpha of Chromobacterium violaceum (strain ATCC 12472 / DSM 30191 / JCM 1249 / CCUG 213 / NBRC 12614 / NCIMB 9131 / NCTC 9757 / MK).